Here is a 73-residue protein sequence, read N- to C-terminus: UPF0499 protein NFIA_054990 (73 aa).

The N-terminal stretch at 1 to 20 (MKSFNLLSLSLLLAIASAAA) is a signal peptide. Intrachain disulfides connect Cys-46-Cys-60, Cys-50-Cys-63, and Cys-56-Cys-70.

It belongs to the UPF0499 family.

The protein resides in the secreted. The chain is UPF0499 protein NFIA_054990 from Neosartorya fischeri (strain ATCC 1020 / DSM 3700 / CBS 544.65 / FGSC A1164 / JCM 1740 / NRRL 181 / WB 181) (Aspergillus fischerianus).